Reading from the N-terminus, the 366-residue chain is UDP-N-acetylenolpyruvoylglucosamine reductase (366 aa).

In terms of domain architecture, FAD-binding PCMH-type spans 29-203 (VGPVARTLVT…LEVEFALDAS (175 aa)). Residue arginine 177 is part of the active site. Serine 258 serves as the catalytic Proton donor. Glutamate 358 is an active-site residue.

The protein belongs to the MurB family. FAD serves as cofactor.

It is found in the cytoplasm. It catalyses the reaction UDP-N-acetyl-alpha-D-muramate + NADP(+) = UDP-N-acetyl-3-O-(1-carboxyvinyl)-alpha-D-glucosamine + NADPH + H(+). It functions in the pathway cell wall biogenesis; peptidoglycan biosynthesis. Cell wall formation. The polypeptide is UDP-N-acetylenolpyruvoylglucosamine reductase (Mycobacterium marinum (strain ATCC BAA-535 / M)).